The sequence spans 238 residues: Zinc import ATP-binding protein ZnuC (238 aa).

The ABC transporter domain occupies 5-220; that stretch reads ITLKNIHVSF…LEFISIFGLK (216 aa). 37–44 is an ATP binding site; that stretch reads GPNGAGKS.

Belongs to the ABC transporter superfamily. Zinc importer (TC 3.A.1.15.5) family. As to quaternary structure, the complex is composed of two ATP-binding proteins (ZnuC), two transmembrane proteins (ZnuB) and a solute-binding protein (ZnuA).

The protein localises to the cell inner membrane. The enzyme catalyses Zn(2+)(out) + ATP(in) + H2O(in) = Zn(2+)(in) + ADP(in) + phosphate(in) + H(+)(in). Its function is as follows. Part of the ABC transporter complex ZnuABC involved in zinc import. Responsible for energy coupling to the transport system. The polypeptide is Zinc import ATP-binding protein ZnuC (Buchnera aphidicola subsp. Schizaphis graminum (strain Sg)).